The primary structure comprises 560 residues: Membrane protein insertase YidC (560 aa).

Helical transmembrane passes span 5–25, 334–354, 357–377, 431–451, 476–496, and 522–542; these read IINL…WQYF, AIDF…MNFF, YVGN…LLMF, LPIL…YVTI, LFGL…WPIL, and FMPL…LIYW.

Belongs to the OXA1/ALB3/YidC family. Type 1 subfamily. As to quaternary structure, interacts with the Sec translocase complex via SecD. Specifically interacts with transmembrane segments of nascent integral membrane proteins during membrane integration.

It localises to the cell inner membrane. Its function is as follows. Required for the insertion and/or proper folding and/or complex formation of integral membrane proteins into the membrane. Involved in integration of membrane proteins that insert both dependently and independently of the Sec translocase complex, as well as at least some lipoproteins. Aids folding of multispanning membrane proteins. This chain is Membrane protein insertase YidC, found in Rickettsia akari (strain Hartford).